We begin with the raw amino-acid sequence, 377 residues long: Probable riboflavin import permease protein RfuC (377 aa).

10 helical membrane passes run 4-24 (VINS…VIVL), 49-69 (ALFH…CALK), 72-92 (MINL…ALLL), 98-118 (VGFL…AGIL), 135-155 (ITSF…IITV), 182-202 (FGVP…GCFF), 223-245 (FVGF…LFGL), 249-268 (FSVV…GMGY), 274-294 (ALIA…FAWM), and 303-323 (LGAH…FLLI).

The protein belongs to the binding-protein-dependent transport system permease family. In terms of assembly, the complex is probably composed of two ATP-binding proteins (RfuB), two transmembrane proteins (RfuC and RfuD) and a solute-binding protein (RfuA).

It is found in the cell inner membrane. In terms of biological role, probably part of the ABC transporter complex RfuABCD involved in riboflavin import. Probably responsible for the translocation of the substrate across the membrane. The chain is Probable riboflavin import permease protein RfuC from Treponema pallidum (strain Nichols).